Reading from the N-terminus, the 417-residue chain is Gamma-glutamyl phosphate reductase (417 aa).

It belongs to the gamma-glutamyl phosphate reductase family.

The protein localises to the cytoplasm. It catalyses the reaction L-glutamate 5-semialdehyde + phosphate + NADP(+) = L-glutamyl 5-phosphate + NADPH + H(+). Its pathway is amino-acid biosynthesis; L-proline biosynthesis; L-glutamate 5-semialdehyde from L-glutamate: step 2/2. Functionally, catalyzes the NADPH-dependent reduction of L-glutamate 5-phosphate into L-glutamate 5-semialdehyde and phosphate. The product spontaneously undergoes cyclization to form 1-pyrroline-5-carboxylate. The polypeptide is Gamma-glutamyl phosphate reductase (Enterobacter sp. (strain 638)).